Reading from the N-terminus, the 660-residue chain is MTTIIELPEVLANQIAAGEVIERPASVVKELVENAIDAKSSQITVEIEESGLKMIQITDNGEGMSHEDLPLSLRRHATSKIKSQSDLFRIRTLGFRGEALPSVASISKLTIKTATAEAEHGSILVASGGKIEQLEAVSTPVGTKIKVENLFYNTPARLKYMKSLQAELAHVVDVVNRLSLAHPEIAFTLISDGKQLTQTSGTGDLRQALAGIYGLNTAKKMIDISSADLDFEVGGFVSLPELTRANRNYITILINGRYIKNFLLNRAILDGYGSKLMVGRFPIAVIDIQIDPYLADVNVHPTKQEIRISKERELMALISTAISESLREQDLIPDALENLARSSTRSFSKPEQTSLPLQPSQLYYDPQKNDFFTKETVVSEDSPQGFNHEVLIDSDVKQVDNLQVTKTESEAAAPSVKYASRPDPMLSDGEHPGLDVHNKQKLSQMLDRLENEEQSVFPELDYFGQMHGTYLFAQGRDGLFIIDQHAAQERVKYEYYRDKIGEVDNSLQQLLVPYLFEFSGSDFINLQEKMSLLNEVGIYLEPYGNHTFILREHPIWMKETEIESGVYEMCDMLLLTNEVSIKTYRAELAIMMSCKHSIKANHSLDDYSARQLLLQLAQCKNPYNCPHGRPVLINFSKADMEKMFRRIQENHTSLRELGKY.

The protein belongs to the DNA mismatch repair MutL/HexB family.

This protein is involved in the repair of mismatches in DNA. It is required for dam-dependent methyl-directed DNA mismatch repair. May act as a 'molecular matchmaker', a protein that promotes the formation of a stable complex between two or more DNA-binding proteins in an ATP-dependent manner without itself being part of a final effector complex. The sequence is that of DNA mismatch repair protein MutL from Streptococcus equi subsp. zooepidemicus (strain H70).